The primary structure comprises 445 residues: UPF0210 protein SPH_0352 (445 aa).

The protein belongs to the UPF0210 family. Homodimer.

The chain is UPF0210 protein SPH_0352 from Streptococcus pneumoniae (strain Hungary19A-6).